We begin with the raw amino-acid sequence, 692 residues long: DNA ligase (692 aa).

NAD(+) contacts are provided by residues 35-39 (DLVYD), 88-89 (SL), and E117. K119 serves as the catalytic N6-AMP-lysine intermediate. The NAD(+) site is built by R140, E176, K301, and K325. Residues C416, C419, C434, and C439 each coordinate Zn(2+). A BRCT domain is found at 611–692 (LTNQSNSWAS…FDLIKNSKKT (82 aa)).

It belongs to the NAD-dependent DNA ligase family. LigA subfamily. The cofactor is Mg(2+). Mn(2+) is required as a cofactor.

The catalysed reaction is NAD(+) + (deoxyribonucleotide)n-3'-hydroxyl + 5'-phospho-(deoxyribonucleotide)m = (deoxyribonucleotide)n+m + AMP + beta-nicotinamide D-nucleotide.. In terms of biological role, DNA ligase that catalyzes the formation of phosphodiester linkages between 5'-phosphoryl and 3'-hydroxyl groups in double-stranded DNA using NAD as a coenzyme and as the energy source for the reaction. It is essential for DNA replication and repair of damaged DNA. The protein is DNA ligase of Mesomycoplasma hyopneumoniae (strain 232) (Mycoplasma hyopneumoniae).